The chain runs to 460 residues: ATP synthase subunit beta (460 aa).

Residue 150–157 coordinates ATP; that stretch reads GGAGVGKT.

It belongs to the ATPase alpha/beta chains family. As to quaternary structure, F-type ATPases have 2 components, CF(1) - the catalytic core - and CF(0) - the membrane proton channel. CF(1) has five subunits: alpha(3), beta(3), gamma(1), delta(1), epsilon(1). CF(0) has three main subunits: a(1), b(2) and c(9-12). The alpha and beta chains form an alternating ring which encloses part of the gamma chain. CF(1) is attached to CF(0) by a central stalk formed by the gamma and epsilon chains, while a peripheral stalk is formed by the delta and b chains.

Its subcellular location is the cell inner membrane. The enzyme catalyses ATP + H2O + 4 H(+)(in) = ADP + phosphate + 5 H(+)(out). Its function is as follows. Produces ATP from ADP in the presence of a proton gradient across the membrane. The catalytic sites are hosted primarily by the beta subunits. In Yersinia pestis bv. Antiqua (strain Angola), this protein is ATP synthase subunit beta.